Here is a 293-residue protein sequence, read N- to C-terminus: Tyrosine recombinase XerD (293 aa).

Positions Met1–Leu83 constitute a Core-binding (CB) domain. The Tyr recombinase domain maps to His104–His287. Active-site residues include Arg144, Lys168, His239, Arg242, and His265. Residue Tyr274 is the O-(3'-phospho-DNA)-tyrosine intermediate of the active site.

Belongs to the 'phage' integrase family. XerD subfamily. As to quaternary structure, forms a cyclic heterotetrameric complex composed of two molecules of XerC and two molecules of XerD.

Its subcellular location is the cytoplasm. Its function is as follows. Site-specific tyrosine recombinase, which acts by catalyzing the cutting and rejoining of the recombining DNA molecules. The XerC-XerD complex is essential to convert dimers of the bacterial chromosome into monomers to permit their segregation at cell division. It also contributes to the segregational stability of plasmids. This Lacticaseibacillus casei (Lactobacillus casei) protein is Tyrosine recombinase XerD.